Reading from the N-terminus, the 185-residue chain is Photosystem I assembly protein Ycf4 (185 aa).

2 helical membrane-spanning segments follow: residues 21–43 (NFFWACILFLGSLGFLAVGASSY) and 63–85 (GVVMSFYGIAGLFISSYLWCTIL).

The protein belongs to the Ycf4 family.

The protein resides in the plastid. It is found in the chloroplast thylakoid membrane. Functionally, seems to be required for the assembly of the photosystem I complex. The polypeptide is Photosystem I assembly protein Ycf4 (Saccharum hybrid (Sugarcane)).